The primary structure comprises 486 residues: MTDLVKLTIAQSHKLLKDHKISSAELTKAHLERIEKLEPEIKAFMTVCPETALSQAEAADKAIKQGDIRPLTGIPMALKDVLCTKGIRTTCSSKMLENFVPPYNAHVVDKLAKEGAVLLGKTNMDEFAMGSSTENSAYFTTRNPWNTDKVPGGSSGGSAACVAASEAVFSLGSDTGGSIRQPASFCSVTGYKPSYGMVSRYGLVAFASSLDQIGPFTKDAMDCALVMNAIAGFDDRDSTSVPQTVPDFSSGLDGNIKGFKLGVPKEYFSQNMRPDITEKINDALGVLSGLGASIDREVSLPHTPYALAVYYILAPSEASANLSRYDGVKYGYSYNPTENMWEAMEKTRAKGFGPEVKRRIMIGTYALSAGYYDAWYVKAQKVRTLISQEFNNAFEKYDALITPTTPNLPFSIGEKLNDPFEMYMCDTCTIPINIAGLPAVSIPAGFVDGLPVGLQIIGKPFADQTTMRIAHAFQCATAWHKETPRL.

Residues Lys79 and Ser154 each act as charge relay system in the active site. Catalysis depends on Ser178, which acts as the Acyl-ester intermediate.

This sequence belongs to the amidase family. GatA subfamily. As to quaternary structure, heterotrimer of A, B and C subunits.

The catalysed reaction is L-glutamyl-tRNA(Gln) + L-glutamine + ATP + H2O = L-glutaminyl-tRNA(Gln) + L-glutamate + ADP + phosphate + H(+). Allows the formation of correctly charged Gln-tRNA(Gln) through the transamidation of misacylated Glu-tRNA(Gln) in organisms which lack glutaminyl-tRNA synthetase. The reaction takes place in the presence of glutamine and ATP through an activated gamma-phospho-Glu-tRNA(Gln). This is Glutamyl-tRNA(Gln) amidotransferase subunit A from Dehalococcoides mccartyi (strain ATCC BAA-2100 / JCM 16839 / KCTC 5957 / BAV1).